Consider the following 246-residue polypeptide: Pyridoxine 5'-phosphate synthase (246 aa).

Asparagine 12 provides a ligand contact to 3-amino-2-oxopropyl phosphate. 14–15 is a binding site for 1-deoxy-D-xylulose 5-phosphate; it reads DH. Arginine 23 serves as a coordination point for 3-amino-2-oxopropyl phosphate. Histidine 48 acts as the Proton acceptor in catalysis. Residues arginine 50 and histidine 55 each coordinate 1-deoxy-D-xylulose 5-phosphate. Glutamate 75 (proton acceptor) is an active-site residue. Threonine 105 contacts 1-deoxy-D-xylulose 5-phosphate. The Proton donor role is filled by histidine 196. Residues glycine 197 and 218-219 each bind 3-amino-2-oxopropyl phosphate; that span reads GH.

This sequence belongs to the PNP synthase family. Homooctamer; tetramer of dimers.

The protein resides in the cytoplasm. It carries out the reaction 3-amino-2-oxopropyl phosphate + 1-deoxy-D-xylulose 5-phosphate = pyridoxine 5'-phosphate + phosphate + 2 H2O + H(+). Its pathway is cofactor biosynthesis; pyridoxine 5'-phosphate biosynthesis; pyridoxine 5'-phosphate from D-erythrose 4-phosphate: step 5/5. Catalyzes the complicated ring closure reaction between the two acyclic compounds 1-deoxy-D-xylulose-5-phosphate (DXP) and 3-amino-2-oxopropyl phosphate (1-amino-acetone-3-phosphate or AAP) to form pyridoxine 5'-phosphate (PNP) and inorganic phosphate. This chain is Pyridoxine 5'-phosphate synthase, found in Nitrosococcus oceani (strain ATCC 19707 / BCRC 17464 / JCM 30415 / NCIMB 11848 / C-107).